A 196-amino-acid chain; its full sequence is Heat shock protein beta-8 (196 aa).

A phosphoserine mark is found at Ser24 and Ser57. Position 63 is a phosphothreonine; by PKC; in vitro (Thr63). Residues Arg71 and Arg78 each carry the asymmetric dimethylarginine modification. The sHSP domain occupies 74-185 (TATARFGVPA…TFGESSFNNE (112 aa)). Positions 176–196 (TFGESSFNNELPQDSQEVTCT) are disordered. Over residues 177–196 (FGESSFNNELPQDSQEVTCT) the composition is skewed to polar residues.

It belongs to the small heat shock protein (HSP20) family. In terms of assembly, monomer. Forms a ternary complex with BAG3 and HSPA1A. Component of the chaperone-assisted selective autophagy (CASA) complex consisting of BAG3, HSPA8/HSC70, HSPB8 and STUB1/CHIP. Interacts with HSPB1. Interacts with DNAJB6. Interacts with BAG3. Predominantly expressed in skeletal muscle and heart.

The protein localises to the cytoplasm. The protein resides in the nucleus. Involved in the chaperone-assisted selective autophagy (CASA), a crucial process for protein quality control, particularly in mechanical strained cells and tissues such as muscle. Displays temperature-dependent chaperone activity. This is Heat shock protein beta-8 (HSPB8) from Homo sapiens (Human).